The sequence spans 453 residues: Bifunctional protein GlmU (453 aa).

A pyrophosphorylase region spans residues 1-226; sequence MFAIAILAAG…IDEVSGVNDR (226 aa). UDP-N-acetyl-alpha-D-glucosamine-binding positions include 7 to 10, K21, Q73, and 78 to 79; these read LAAG and GT. D103 serves as a coordination point for Mg(2+). Positions 140, 155, 170, and 224 each coordinate UDP-N-acetyl-alpha-D-glucosamine. N224 is a Mg(2+) binding site. Positions 227–247 are linker; sequence AQLANCENLIQQSLRNHWMSK. The segment at 248–453 is N-acetyltransferase; that stretch reads GVSFIDPESC…NWKTREETNQ (206 aa). UDP-N-acetyl-alpha-D-glucosamine-binding residues include R329 and K347. The active-site Proton acceptor is the H359. Residues Y362 and N373 each contribute to the UDP-N-acetyl-alpha-D-glucosamine site. Residues A376, A419, and R436 each contribute to the acetyl-CoA site.

In the N-terminal section; belongs to the N-acetylglucosamine-1-phosphate uridyltransferase family. It in the C-terminal section; belongs to the transferase hexapeptide repeat family. As to quaternary structure, homotrimer. The cofactor is Mg(2+).

The protein localises to the cytoplasm. The enzyme catalyses alpha-D-glucosamine 1-phosphate + acetyl-CoA = N-acetyl-alpha-D-glucosamine 1-phosphate + CoA + H(+). It catalyses the reaction N-acetyl-alpha-D-glucosamine 1-phosphate + UTP + H(+) = UDP-N-acetyl-alpha-D-glucosamine + diphosphate. It functions in the pathway nucleotide-sugar biosynthesis; UDP-N-acetyl-alpha-D-glucosamine biosynthesis; N-acetyl-alpha-D-glucosamine 1-phosphate from alpha-D-glucosamine 6-phosphate (route II): step 2/2. Its pathway is nucleotide-sugar biosynthesis; UDP-N-acetyl-alpha-D-glucosamine biosynthesis; UDP-N-acetyl-alpha-D-glucosamine from N-acetyl-alpha-D-glucosamine 1-phosphate: step 1/1. It participates in bacterial outer membrane biogenesis; LPS lipid A biosynthesis. Its function is as follows. Catalyzes the last two sequential reactions in the de novo biosynthetic pathway for UDP-N-acetylglucosamine (UDP-GlcNAc). The C-terminal domain catalyzes the transfer of acetyl group from acetyl coenzyme A to glucosamine-1-phosphate (GlcN-1-P) to produce N-acetylglucosamine-1-phosphate (GlcNAc-1-P), which is converted into UDP-GlcNAc by the transfer of uridine 5-monophosphate (from uridine 5-triphosphate), a reaction catalyzed by the N-terminal domain. This Prochlorococcus marinus (strain MIT 9211) protein is Bifunctional protein GlmU.